We begin with the raw amino-acid sequence, 156 residues long: Regulatory protein RecX (156 aa).

The protein belongs to the RecX family.

It localises to the cytoplasm. Its function is as follows. Modulates RecA activity. The polypeptide is Regulatory protein RecX (Pseudomonas putida (strain GB-1)).